Here is a 317-residue protein sequence, read N- to C-terminus: tRNA pseudouridine synthase B (317 aa).

Asp-47 (nucleophile) is an active-site residue.

The protein belongs to the pseudouridine synthase TruB family. Type 1 subfamily.

The catalysed reaction is uridine(55) in tRNA = pseudouridine(55) in tRNA. In terms of biological role, responsible for synthesis of pseudouridine from uracil-55 in the psi GC loop of transfer RNAs. In Shewanella sp. (strain ANA-3), this protein is tRNA pseudouridine synthase B.